A 217-amino-acid polypeptide reads, in one-letter code: Large ribosomal subunit protein uL1 (217 aa).

This sequence belongs to the universal ribosomal protein uL1 family. As to quaternary structure, part of the 50S ribosomal subunit.

In terms of biological role, binds directly to 23S rRNA. The L1 stalk is quite mobile in the ribosome, and is involved in E site tRNA release. Protein L1 is also a translational repressor protein, it controls the translation of the L11 operon by binding to its mRNA. The protein is Large ribosomal subunit protein uL1 of Anaplasma marginale (strain St. Maries).